The primary structure comprises 552 residues: Dihydroxy-acid dehydratase (552 aa).

Residue Asp78 participates in Mg(2+) binding. Cys119 provides a ligand contact to [2Fe-2S] cluster. Asp120 and Lys121 together coordinate Mg(2+). The residue at position 121 (Lys121) is an N6-carboxylysine. Residue Cys191 coordinates [2Fe-2S] cluster. Glu442 contributes to the Mg(2+) binding site. The Proton acceptor role is filled by Ser468.

It belongs to the IlvD/Edd family. As to quaternary structure, homodimer. [2Fe-2S] cluster is required as a cofactor. It depends on Mg(2+) as a cofactor.

It carries out the reaction (2R)-2,3-dihydroxy-3-methylbutanoate = 3-methyl-2-oxobutanoate + H2O. The enzyme catalyses (2R,3R)-2,3-dihydroxy-3-methylpentanoate = (S)-3-methyl-2-oxopentanoate + H2O. The protein operates within amino-acid biosynthesis; L-isoleucine biosynthesis; L-isoleucine from 2-oxobutanoate: step 3/4. It functions in the pathway amino-acid biosynthesis; L-valine biosynthesis; L-valine from pyruvate: step 3/4. Functions in the biosynthesis of branched-chain amino acids. Catalyzes the dehydration of (2R,3R)-2,3-dihydroxy-3-methylpentanoate (2,3-dihydroxy-3-methylvalerate) into 2-oxo-3-methylpentanoate (2-oxo-3-methylvalerate) and of (2R)-2,3-dihydroxy-3-methylbutanoate (2,3-dihydroxyisovalerate) into 2-oxo-3-methylbutanoate (2-oxoisovalerate), the penultimate precursor to L-isoleucine and L-valine, respectively. In Caldicellulosiruptor saccharolyticus (strain ATCC 43494 / DSM 8903 / Tp8T 6331), this protein is Dihydroxy-acid dehydratase.